The primary structure comprises 260 residues: Small ribosomal subunit protein uS2 (260 aa).

It belongs to the universal ribosomal protein uS2 family.

The protein is Small ribosomal subunit protein uS2 of Mesorhizobium japonicum (strain LMG 29417 / CECT 9101 / MAFF 303099) (Mesorhizobium loti (strain MAFF 303099)).